We begin with the raw amino-acid sequence, 919 residues long: Leucine--tRNA ligase (919 aa).

The 'HIGH' region signature appears at 83 to 93 (PYPSGKLHMGH). A 'KMSKS' region motif is present at residues 670–674 (KMSKS). ATP is bound at residue K673.

The protein belongs to the class-I aminoacyl-tRNA synthetase family.

The protein resides in the cytoplasm. It carries out the reaction tRNA(Leu) + L-leucine + ATP = L-leucyl-tRNA(Leu) + AMP + diphosphate. The polypeptide is Leucine--tRNA ligase (Psychrobacter cryohalolentis (strain ATCC BAA-1226 / DSM 17306 / VKM B-2378 / K5)).